Reading from the N-terminus, the 211-residue chain is Glycerol-3-phosphate acyltransferase (211 aa).

5 helical membrane-spanning segments follow: residues alanine 5–cysteine 25, valine 58–valine 78, proline 80–phenylalanine 100, leucine 112–leucine 132, and glycine 138–phenylalanine 158.

Belongs to the PlsY family. In terms of assembly, probably interacts with PlsX.

It is found in the cell inner membrane. The enzyme catalyses an acyl phosphate + sn-glycerol 3-phosphate = a 1-acyl-sn-glycero-3-phosphate + phosphate. It functions in the pathway lipid metabolism; phospholipid metabolism. Functionally, catalyzes the transfer of an acyl group from acyl-phosphate (acyl-PO(4)) to glycerol-3-phosphate (G3P) to form lysophosphatidic acid (LPA). This enzyme utilizes acyl-phosphate as fatty acyl donor, but not acyl-CoA or acyl-ACP. The chain is Glycerol-3-phosphate acyltransferase from Pectobacterium atrosepticum (strain SCRI 1043 / ATCC BAA-672) (Erwinia carotovora subsp. atroseptica).